Reading from the N-terminus, the 447-residue chain is C4-dicarboxylate transport protein 3 (447 aa).

8 consecutive transmembrane segments (helical) span residues 5–27 (TLGK…GVAA), 42–64 (IKLI…IARM), 77–99 (ALVY…VNLV), 146–165 (LARN…GIAL), 186–208 (VFSI…MAFT), 223–245 (LMAT…VARL), 315–337 (IFVA…LGVL), and 352–374 (FITL…VLLL).

It belongs to the dicarboxylate/amino acid:cation symporter (DAACS) (TC 2.A.23) family.

It localises to the cell inner membrane. Functionally, responsible for the transport of dicarboxylates such as succinate, fumarate, and malate from the periplasm across the membrane. This Ralstonia nicotianae (strain ATCC BAA-1114 / GMI1000) (Ralstonia solanacearum) protein is C4-dicarboxylate transport protein 3 (dctA3).